The sequence spans 445 residues: Vacuolar fusion protein CCZ1 homolog (445 aa).

It belongs to the CCZ1 family.

The protein is Vacuolar fusion protein CCZ1 homolog of Dictyostelium discoideum (Social amoeba).